The sequence spans 725 residues: N-alpha-acetyltransferase 35, NatC auxiliary subunit (725 aa).

Residues 548 to 573 form a disordered region; it reads ERIMEEQQKGRSSKKTKKKKKVRPLS. Basic residues predominate over residues 558–571; sequence RSSKKTKKKKKVRP.

The protein belongs to the MAK10 family. As to quaternary structure, component of the N-terminal acetyltransferase C (NatC) complex, which is composed of NAA35, NAA38 and NAA30. As to expression, expressed in primary spermatocytes, basal epidermis, interstitial fibroblasts of skeletal muscle, and intestinal crypts.

The protein resides in the cytoplasm. Functionally, auxillary component of the N-terminal acetyltransferase C (NatC) complex which catalyzes acetylation of N-terminal methionine residues. N-terminal acetylation protects proteins from ubiquitination and degradation by the N-end rule pathway. Involved in regulation of apoptosis and proliferation of smooth muscle cells. In Rattus norvegicus (Rat), this protein is N-alpha-acetyltransferase 35, NatC auxiliary subunit (Naa35).